A 147-amino-acid polypeptide reads, in one-letter code: Lysozyme C-1 (147 aa).

The N-terminal stretch at 1-18 (MKALIILGFLFLSVAVQG) is a signal peptide. The region spanning 19–147 (KVFERCELAR…VSSYVEGCTL (129 aa)) is the C-type lysozyme domain. 4 cysteine pairs are disulfide-bonded: cysteine 24–cysteine 145, cysteine 48–cysteine 133, cysteine 83–cysteine 99, and cysteine 95–cysteine 113. Residues glutamate 53 and aspartate 71 contribute to the active site.

It belongs to the glycosyl hydrolase 22 family. In terms of assembly, monomer. As to expression, stomach-specific.

It catalyses the reaction Hydrolysis of (1-&gt;4)-beta-linkages between N-acetylmuramic acid and N-acetyl-D-glucosamine residues in a peptidoglycan and between N-acetyl-D-glucosamine residues in chitodextrins.. Lysozymes have primarily a bacteriolytic function; those in tissues and body fluids are associated with the monocyte-macrophage system and enhance the activity of immunoagents. In Bos taurus (Bovine), this protein is Lysozyme C-1 (LYZ1).